The sequence spans 436 residues: Sarcosine reductase complex component B subunit beta (436 aa).

Sec350 is an active-site residue. Residue Sec350 is a non-standard amino acid, selenocysteine.

This sequence belongs to the GrdB/GrdF/GrdH family. In terms of assembly, heterotetramer of two alpha and two beta subunits. Component of the sarcosine reductase complex, together with components A and C. PB is substrate specific.

The catalysed reaction is acetyl phosphate + methylamine + [thioredoxin]-disulfide + H2O = sarcosine + [thioredoxin]-dithiol + phosphate + H(+). In terms of biological role, in the first step of sarcosine reductase, the substrate is bound to component PB via a Schiff base intermediate. Then the PB-activated substrate is nucleophilically attacked by the selenol anion of component PA to transform it to a carboxymethylated selenoether and the respective amine. By action of component PC, acetyl phosphate is formed, leaving component PA in its oxidized state. Finally component PA becomes reduced by the thioredoxin system to start a new catalytic cycle of reductive deamination. This is Sarcosine reductase complex component B subunit beta (grdF) from Peptoclostridium acidaminophilum (Eubacterium acidaminophilum).